The following is an 871-amino-acid chain: Leucine--tRNA ligase (871 aa).

Residues 43-53 (PYPSGRIHIGH) carry the 'HIGH' region motif. The 'KMSKS' region motif lies at 629-633 (KMSKS). Lysine 632 lines the ATP pocket.

Belongs to the class-I aminoacyl-tRNA synthetase family.

The protein resides in the cytoplasm. The enzyme catalyses tRNA(Leu) + L-leucine + ATP = L-leucyl-tRNA(Leu) + AMP + diphosphate. The protein is Leucine--tRNA ligase of Chelativorans sp. (strain BNC1).